The following is a 2467-amino-acid chain: Polyprotein P1234 (2467 aa).

One can recognise an Alphavirus-like MT domain in the interval 27–258 (ESQQVTPNDH…ESRKLLRSWH (232 aa)). Positions 243 to 262 (GSTLYTESRKLLRSWHLPSV) are nsP1 membrane-binding. Residues cysteine 416 and cysteine 418 are each lipidated (S-palmitoyl cysteine; by host). In terms of domain architecture, (+)RNA virus helicase ATP-binding spans 689-841 (DLINPPFHEF…HNICTRVLHK (153 aa)). Residue 720 to 727 (GVPGSGKS) participates in a ribonucleoside 5'-triphosphate binding. Positions 842 to 990 (SISRRCTLPV…LEEWHEEHDG (149 aa)) constitute a (+)RNA virus helicase C-terminal domain. The 323-residue stretch at 1003–1325 (DPFQNKAKVC…QKLSSMYACN (323 aa)) folds into the Peptidase C9 domain. The segment at 1004–1023 (PFQNKAKVCWAKCLVQVLET) is nucleolus localization signal. Cysteine 1012 functions as the For cysteine protease nsP2 activity in the catalytic mechanism. Residues 1056–1065 (TRYYGVDLDS) carry the Nuclear export signal motif. Residue histidine 1081 is the For cysteine protease nsP2 activity of the active site. Positions 1180-1184 (PHKRV) match the Nuclear localization signal motif. The region spanning 1333-1492 (APSYRVRRAD…KIQEAIDRRT (160 aa)) is the Macro domain. 5 residues coordinate ADP-D-ribose: aspartate 1342, asparagine 1356, glycine 1364, glycine 1444, and phenylalanine 1446. Zn(2+) is bound by residues cysteine 1594, cysteine 1596, cysteine 1619, and cysteine 1637. Positions 1768–1803 (KVATEPPLEPEAPIPAPRKRRTTSTSPPHNPEDFVP) are disordered. Positions 1774–1783 (PLEPEAPIPA) are enriched in pro residues. Short sequence motifs (FGDF; binding to host G3BP1) lie at residues 1820–1823 (FGDL) and 1841–1844 (FGDI). The RdRp catalytic domain maps to 2221–2336 (DAVLETDIAS…HGVRSDPLMA (116 aa)).

In terms of assembly, interacts with non-structural protein 3. Interacts with RNA-directed RNA polymerase nsP4. Interacts with protease nsP2. interacts with itself. Interacts with mRNA-capping enzyme nsP1. Interacts with host DDX1. Interacts with host DDX3. Interacts (via C-terminus) with host G3BP1; this interaction inhibits the formation of host stress granules on viral mRNAs and the nsp3-G3BP1 complexes bind viral RNAs and probably orchestrate the assembly of viral replication complexes. Interacts (via C-terminus) with host G3BP2; this interaction inhibits the formation of host stress granules on viral mRNAs and the nsp3-G3BP2 complexes bind viral RNAs and probably orchestrate the assembly of viral replication complexes. As to quaternary structure, interacts with mRNA-capping enzyme nsP1. Interacts with protease nsP2. interacts with itself. In terms of assembly, interacts with RNA-directed RNA polymerase nsP4. Interacts with mRNA-capping enzyme nsP1. Interacts with KPNA1/karyopherin-alpha1; this interaction probably allows the active transport of protease nsP2 into the host nucleus. Mg(2+) serves as cofactor. The cofactor is Mn(2+). Post-translationally, specific enzymatic cleavages in vivo yield mature proteins. The processing of the polyprotein is temporally regulated. In early stages (1.7 hpi), P1234 is first cleaved in trans through its nsP2 protease activity, releasing P123' and nsP4, which associate to form the early replication complex. At the same time, P1234 is also cut at the nsP1/nsP2 site early in infection but with lower efficiency. After replication of the viral minus-strand RNAs (4 hpi), the polyproteins are cut at the nsP1/nsP2 and nsP2/nsP3 sites very efficiently, preventing accumulation of P123' and P1234 and allowing the formation of the late replication complex. NsP3'/nsP4 site is not cleaved anymore and P34 is produced rather than nsP4. In terms of processing, specific enzymatic cleavages in vivo yield mature proteins. The processing of the polyprotein is temporally regulated. In early stages (1.7 hpi), P123 is cleaved at the nsP1/nsP2 site with low efficiency. After replication of the viral minus-strand RNAs (4 hpi), the polyproteins are cut at the nsP1/nsP2 and nsP2/nsP3 sites very efficiently, preventing accumulation of P123 and allowing the formation of the late replication complex. Palmitoylated by host palmitoyltransferases ZDHHC2 and ZDHHC19. Post-translationally, phosphorylated by host on serines and threonines. In terms of processing, ubiquitinated; targets the protein for rapid degradation via the ubiquitin system. Nsp4 is present in extremely low quantities due to low frequency of translation through the amber stop-codon and the degradation by the ubiquitin pathway.

The protein localises to the host cytoplasmic vesicle membrane. It localises to the host cell membrane. It is found in the host cell projection. The protein resides in the host filopodium. Its subcellular location is the host nucleus. The protein localises to the host cytoplasm. It carries out the reaction GTP + S-adenosyl-L-methionine = N(7)-methyl-GTP + S-adenosyl-L-homocysteine. The enzyme catalyses N(7)-methyl-GTP + L-histidyl-[protein] = N(tele)-(N(7)-methylguanosine 5'-phospho)-L-histidyl-[protein] + diphosphate. It catalyses the reaction N(tele)-(N(7)-methylguanosine 5'-phospho)-L-histidyl-[protein] + a 5'-end diphospho-(purine-ribonucleoside) in mRNA + H(+) = a 5'-end (N(7)-methyl 5'-triphosphoguanosine)-(purine-ribonucleoside) in mRNA + L-histidyl-[protein]. The catalysed reaction is a 5'-end triphospho-ribonucleoside in mRNA + H2O = a 5'-end diphospho-ribonucleoside in mRNA + phosphate + H(+). It carries out the reaction a ribonucleoside 5'-triphosphate + H2O = a ribonucleoside 5'-diphosphate + phosphate + H(+). The enzyme catalyses ATP + H2O = ADP + phosphate + H(+). It catalyses the reaction RNA(n) + a ribonucleoside 5'-triphosphate = RNA(n+1) + diphosphate. The catalysed reaction is RNA(n) + ATP = RNA(n)-3'-adenine ribonucleotide + diphosphate. It carries out the reaction 4-O-(ADP-D-ribosyl)-L-aspartyl-[protein] + H2O = L-aspartyl-[protein] + ADP-D-ribose + H(+). The enzyme catalyses 5-O-(ADP-D-ribosyl)-L-glutamyl-[protein] + H2O = L-glutamyl-[protein] + ADP-D-ribose + H(+). It catalyses the reaction ADP-alpha-D-ribose 1''-phosphate + H2O = ADP-D-ribose + phosphate. Its function is as follows. Inactive precursor of the viral replicase, which is activated by cleavages carried out by the viral protease nsP2. The early replication complex formed by the polyprotein P123 and nsP4 synthesizes minus-strand RNAs. As soon P123 is cleaved into mature proteins, the plus-strand RNAs synthesis begins. In terms of biological role, the early replication complex formed by the polyprotein P123' and nsP4 synthesizes minus-strand RNAs. Polyprotein P123' is a short-lived polyprotein that accumulates during early stage of infection. As soon P123' is cleaved into mature proteins, the plus-strand RNAs synthesis begins. Functionally, cytoplasmic capping enzyme that catalyzes two virus-specific reactions: methyltransferase and nsP1 guanylyltransferase. mRNA-capping is necessary since all viral RNAs are synthesized in the cytoplasm, and host capping enzymes are restricted to the nucleus. The enzymatic reaction involves a covalent link between 7-methyl-GMP and nsP1, whereas eukaryotic capping enzymes form a covalent complex only with GMP. nsP1 capping consists in the following reactions: GTP is first methylated into 7-methyl-GMP and then is covalently linked to nsP1 to form the m7GMp-nsP1 complex from which 7-methyl-GMP complex is transferred to the mRNA to create the cap structure. NsP1 is needed for the initiation of the minus-strand RNAs synthesis. Probably serves as a membrane anchor for the replication complex composed of nsP1-nsP4. Palmitoylated nsP1 is remodeling host cell cytoskeleton, and induces filopodium-like structure formation at the surface of the host cell. Its function is as follows. Multifunctional protein whose N-terminus is part of the RNA polymerase complex and displays NTPase, RNA triphosphatase and helicase activities. NTPase and RNA triphosphatase are involved in viral RNA capping and helicase keeps a check on the dsRNA replication intermediates. The C-terminus harbors a protease that specifically cleaves the polyproteins and releases the mature proteins. Required for the shutoff of minus-strand RNAs synthesis. Specifically inhibits the host IFN response by promoting the nuclear export of host STAT1. Also inhibits host transcription by inducing rapid proteasome-dependent degradation of POLR2A, a catalytic subunit of the RNAPII complex. The resulting inhibition of cellular protein synthesis serves to ensure maximal viral gene expression and to evade host immune response. Seems to be essential for minus-strand RNAs and subgenomic 26S mRNAs synthesis. Displays mono-ADP-ribosylhydrolase activity. ADP-ribosylation is a post-translational modification that controls various processes of the host cell and the virus probably needs to revert it for optimal viral replication. Binds proteins of FXR family and sequesters them into the viral RNA replication complexes thereby inhibiting the formation of host stress granules on viral mRNAs. The nsp3'-FXR complexes bind viral RNAs and probably orchestrate the assembly of viral replication complexes, thanks to the ability of FXR family members to self-assemble and bind DNA. In terms of biological role, seems to be essential for minus-strand RNAs and subgenomic 26S mRNAs synthesis. Displays mono-ADP-ribosylhydrolase activity. ADP-ribosylation is a post-translantional modification that controls various processes of the host cell and the virus probably needs to revert it for optimal viral replication. Binds proteins of G3BP family and sequesters them into the viral RNA replication complexes thereby inhibiting the formation of host stress granules on viral mRNAs. The nsp3-G3BP complexes bind viral RNAs and probably orchestrate the assembly of viral replication complexes, thanks to the ability of G3BP family members to self-assemble and bind DNA. Functionally, RNA dependent RNA polymerase. Replicates genomic and antigenomic RNA by recognizing replications specific signals. The early replication complex formed by the polyprotein P123 and nsP4 synthesizes minus-strand RNAs. The late replication complex composed of fully processed nsP1-nsP4 is responsible for the production of genomic and subgenomic plus-strand RNAs. The core catalytic domain of nsP4 also possesses terminal adenylyltransferase (TATase) activity that is probably involved in maintenance and repair of the poly(A) tail, an element required for replication of the viral genome. The polypeptide is Polyprotein P1234 (Getah virus (GETV)).